Here is a 396-residue protein sequence, read N- to C-terminus: Enoyl-[acyl-carrier-protein] reductase [NADH] (396 aa).

NAD(+) contacts are provided by residues 47-52 (GASTGF), 73-74 (FE), 110-111 (DA), and 138-139 (LA). Residue tyrosine 224 coordinates substrate. The Proton donor role is filled by tyrosine 234. NAD(+) contacts are provided by residues lysine 243 and 272–274 (LVT).

Belongs to the TER reductase family. Monomer.

It carries out the reaction a 2,3-saturated acyl-[ACP] + NAD(+) = a (2E)-enoyl-[ACP] + NADH + H(+). It participates in lipid metabolism; fatty acid biosynthesis. Involved in the final reduction of the elongation cycle of fatty acid synthesis (FAS II). Catalyzes the reduction of a carbon-carbon double bond in an enoyl moiety that is covalently linked to an acyl carrier protein (ACP). The protein is Enoyl-[acyl-carrier-protein] reductase [NADH] of Cytophaga hutchinsonii (strain ATCC 33406 / DSM 1761 / CIP 103989 / NBRC 15051 / NCIMB 9469 / D465).